Consider the following 277-residue polypeptide: Putative phosphoenolpyruvate synthase regulatory protein (277 aa).

Position 157–164 (157–164 (GVSRCGKT)) interacts with ADP.

Belongs to the pyruvate, phosphate/water dikinase regulatory protein family. PSRP subfamily.

It carries out the reaction [pyruvate, water dikinase] + ADP = [pyruvate, water dikinase]-phosphate + AMP + H(+). The enzyme catalyses [pyruvate, water dikinase]-phosphate + phosphate + H(+) = [pyruvate, water dikinase] + diphosphate. Bifunctional serine/threonine kinase and phosphorylase involved in the regulation of the phosphoenolpyruvate synthase (PEPS) by catalyzing its phosphorylation/dephosphorylation. This chain is Putative phosphoenolpyruvate synthase regulatory protein, found in Cronobacter sakazakii (strain ATCC BAA-894) (Enterobacter sakazakii).